Reading from the N-terminus, the 248-residue chain is Ubiquinone biosynthesis O-methyltransferase (248 aa).

The S-adenosyl-L-methionine site is built by Arg-40, Gly-71, Asp-92, and Met-135.

It belongs to the methyltransferase superfamily. UbiG/COQ3 family.

It carries out the reaction a 3-demethylubiquinol + S-adenosyl-L-methionine = a ubiquinol + S-adenosyl-L-homocysteine + H(+). The enzyme catalyses a 3-(all-trans-polyprenyl)benzene-1,2-diol + S-adenosyl-L-methionine = a 2-methoxy-6-(all-trans-polyprenyl)phenol + S-adenosyl-L-homocysteine + H(+). It functions in the pathway cofactor biosynthesis; ubiquinone biosynthesis. Functionally, O-methyltransferase that catalyzes the 2 O-methylation steps in the ubiquinone biosynthetic pathway. The polypeptide is Ubiquinone biosynthesis O-methyltransferase (Dinoroseobacter shibae (strain DSM 16493 / NCIMB 14021 / DFL 12)).